Consider the following 283-residue polypeptide: Pantothenate synthetase (283 aa).

33 to 40 lines the ATP pocket; sequence MGALHEGH. His40 functions as the Proton donor in the catalytic mechanism. Gln64 provides a ligand contact to (R)-pantoate. Gln64 contacts beta-alanine. Residue 150 to 153 coordinates ATP; it reads GEKD. Gln156 is a (R)-pantoate binding site. Residues Ile179 and 187–190 contribute to the ATP site; that span reads MSSR.

This sequence belongs to the pantothenate synthetase family. In terms of assembly, homodimer.

Its subcellular location is the cytoplasm. The enzyme catalyses (R)-pantoate + beta-alanine + ATP = (R)-pantothenate + AMP + diphosphate + H(+). Its pathway is cofactor biosynthesis; (R)-pantothenate biosynthesis; (R)-pantothenate from (R)-pantoate and beta-alanine: step 1/1. In terms of biological role, catalyzes the condensation of pantoate with beta-alanine in an ATP-dependent reaction via a pantoyl-adenylate intermediate. The polypeptide is Pantothenate synthetase (Mesorhizobium japonicum (strain LMG 29417 / CECT 9101 / MAFF 303099) (Mesorhizobium loti (strain MAFF 303099))).